A 317-amino-acid polypeptide reads, in one-letter code: DNA-directed RNA polymerase subunit alpha 2 (317 aa).

The alpha N-terminal domain (alpha-NTD) stretch occupies residues 1-227 (MALENLLHPT…NQLRNIVDIE (227 aa)). The alpha C-terminal domain (alpha-CTD) stretch occupies residues 241–317 (INPILLKHVE…TLIENWPQDL (77 aa)).

Belongs to the RNA polymerase alpha chain family. As to quaternary structure, homodimer. The RNAP catalytic core consists of 2 alpha, 1 beta, 1 beta' and 1 omega subunit. When a sigma factor is associated with the core the holoenzyme is formed, which can initiate transcription.

It catalyses the reaction RNA(n) + a ribonucleoside 5'-triphosphate = RNA(n+1) + diphosphate. Its function is as follows. DNA-dependent RNA polymerase catalyzes the transcription of DNA into RNA using the four ribonucleoside triphosphates as substrates. This Francisella tularensis subsp. holarctica (strain LVS) protein is DNA-directed RNA polymerase subunit alpha 2.